A 760-amino-acid polypeptide reads, in one-letter code: Cyclin-D-binding Myb-like transcription factor 1 (760 aa).

An interaction with CCND2 region spans residues 1 to 237 (MSTVEEDSDT…TPEEIEKLKE (237 aa)). Positions 24-63 (DTDGNLILHCPQNDPDEIDSEDSTEPPHKRLCLSSEDDQS) are disordered. A compositionally biased stretch (acidic residues) spans 37–47 (DPDEIDSEDST). A required for transcriptional activation region spans residues 87–170 (VTMTATTEVA…IDILMNNIER (84 aa)). The tract at residues 87-458 (VTMTATTEVA…DNTAISPSPM (372 aa)) is required for DNA-binding. The interval 176-690 (GIKDATEIIF…PTIVHQVHQT (515 aa)) is interaction with CCND1, CCND2 and CCND3. The 39-residue stretch at 225–263 (GKYTPEEIEKLKELRIKHGNDWATIGAALGRSASSVKDR) folds into the Myb-like 1 domain. The HTH myb-type domain occupies 268 to 333 (KDTCNTGKWT…KWLNYLNWKQ (66 aa)). The H-T-H motif DNA-binding region spans 306-329 (WAAVAERVGTRSEKQCRSKWLNYL). A Myb-like 2 domain is found at 339–388 (WTKEDEINLILRIAELDVADENDINWDLLAEGWSSVRSPQWLRSKWWTIK). Residues 459-760 (AALQIPVQIT…KDVEDLVNCH (302 aa)) form a required for transcriptional activation region. Disordered stretches follow at residues 593–614 (DSDLHSSDFPEPPDALEADTFP) and 738–760 (IGSSLGSPVSEDSKDVEDLVNCH).

This sequence belongs to the DMTF1 family. Interacts with the D-type cyclins CCND1, CCND2 and CCND3. Interaction with D-type cyclins may modulate transcriptional activation by this protein. Post-translationally, phosphorylated by the cyclin-D2/CDK4, cyclin-D3/CDK4 and cyclin-D2/CDK6 complexes and to a lesser extent by the cyclin-D1/CDK4 complex.

Its subcellular location is the nucleus. Its function is as follows. Transcriptional activator which activates the CDKN2A/ARF locus in response to Ras-Raf signaling, thereby promoting p53/TP53-dependent growth arrest. Binds to the consensus sequence 5'-CCCG[GT]ATGT-3'. The protein is Cyclin-D-binding Myb-like transcription factor 1 (Dmtf1) of Rattus norvegicus (Rat).